The following is a 417-amino-acid chain: 4-hydroxy-3-methylbut-2-en-1-yl diphosphate synthase (flavodoxin) (417 aa).

[4Fe-4S] cluster-binding residues include cysteine 303, cysteine 306, cysteine 349, and glutamate 356.

It belongs to the IspG family. It depends on [4Fe-4S] cluster as a cofactor.

It carries out the reaction (2E)-4-hydroxy-3-methylbut-2-enyl diphosphate + oxidized [flavodoxin] + H2O + 2 H(+) = 2-C-methyl-D-erythritol 2,4-cyclic diphosphate + reduced [flavodoxin]. It functions in the pathway isoprenoid biosynthesis; isopentenyl diphosphate biosynthesis via DXP pathway; isopentenyl diphosphate from 1-deoxy-D-xylulose 5-phosphate: step 5/6. In terms of biological role, converts 2C-methyl-D-erythritol 2,4-cyclodiphosphate (ME-2,4cPP) into 1-hydroxy-2-methyl-2-(E)-butenyl 4-diphosphate. This is 4-hydroxy-3-methylbut-2-en-1-yl diphosphate synthase (flavodoxin) from Mesorhizobium japonicum (strain LMG 29417 / CECT 9101 / MAFF 303099) (Mesorhizobium loti (strain MAFF 303099)).